A 622-amino-acid polypeptide reads, in one-letter code: Zinc finger protein ZIC 5 (622 aa).

Disordered stretches follow at residues 50 to 171 (MHLH…KGHS), 190 to 223 (HGAP…SASG), 232 to 251 (GSAL…GHPL), and 321 to 349 (PGPH…HLPG). Residues 126-151 (APPPPAPPLPPSQSSSPPPPPPPPPA) are compositionally biased toward pro residues. Over residues 329–340 (APPPAPPPAPAP) the composition is skewed to pro residues. The C2H2-type 1; degenerate zinc-finger motif lies at 422 to 444 (EDCPREGKPFKAKYKLINHIRVH). 3 C2H2-type zinc fingers span residues 450 to 474 (FPCP…KRTH), 480 to 504 (FKCE…SHVH), and 510 to 534 (YYCK…MKIH). Disordered regions lie at residues 531–573 (MKIH…STLS) and 590–622 (APSH…RTIH). Residues serine 537, serine 541, and serine 559 each carry the phosphoserine modification. Residues 595–604 (HTPSSNGTTS) show a composition bias toward polar residues.

The protein belongs to the GLI C2H2-type zinc-finger protein family.

It is found in the nucleus. In terms of biological role, essential for neural crest development, converting cells from an epidermal fate to a neural crest cell fate. Binds to DNA. The polypeptide is Zinc finger protein ZIC 5 (Zic5) (Mus musculus (Mouse)).